An 88-amino-acid chain; its full sequence is UPF0250 protein Sputcn32_2874 (88 aa).

Belongs to the UPF0250 family.

This Shewanella putrefaciens (strain CN-32 / ATCC BAA-453) protein is UPF0250 protein Sputcn32_2874.